The primary structure comprises 353 residues: Nucleotide-binding protein sce5766 (353 aa).

27–34 provides a ligand contact to ATP; that stretch reads GLSGAGKS. 76–79 contributes to the GTP binding site; sequence DVRV. The segment at 310 to 353 is disordered; the sequence is SGVPSGVGEGMAGAPGVDLRLAQPGATPSEPRPASDTSVTGGER. Over residues 344 to 353 the composition is skewed to polar residues; it reads SDTSVTGGER.

The protein belongs to the RapZ-like family.

In terms of biological role, displays ATPase and GTPase activities. This Sorangium cellulosum (strain So ce56) (Polyangium cellulosum (strain So ce56)) protein is Nucleotide-binding protein sce5766.